Consider the following 847-residue polypeptide: Glucans biosynthesis glucosyltransferase H (847 aa).

Over 1 to 138 (MNKTTEYIDA…KWRTVGTIRR (138 aa)) the chain is Cytoplasmic. Residues 139–156 (YILLILTLAQTVVATWYM) form a helical membrane-spanning segment. Over 157-193 (KTILPYQGWALINPMDMVGQDIWVSFMQLLPYMLQTG) the chain is Periplasmic. Residues 194–216 (ILILFAVLFCWVSAGFWTALMGF) traverse the membrane as a helical segment. Over 217 to 511 (LQLLIGRDKY…LVKGMHPVHR (295 aa)) the chain is Cytoplasmic. A helical membrane pass occupies residues 512–534 (AVFLTGVMSYLSAPLWFMFLALS). The Periplasmic segment spans residues 535 to 567 (TALQVVHALTEPQYFLQPRQLFPVWPQWRPELA). The chain crosses the membrane as a helical span at residues 568 to 590 (IALFASTMVLLFLPKLLSIMLIW). Residues 591–602 (CKGTKEYGGFWR) are Cytoplasmic-facing. A helical transmembrane segment spans residues 603-625 (VTLSLLLEVLFSVLLAPVRMLFH). Residues 626-679 (TVFVVSAFLGWEVVWNSPQRDDDSTPWGEAFMRHGSQLLLGLVWAVGMAWLDLR) are Periplasmic-facing. Residues 680-702 (FLFWLAPIVFSLILSPFVSVISS) traverse the membrane as a helical segment. The Cytoplasmic portion of the chain corresponds to 703-847 (RSTVGLRTKR…ALQGRTSSAR (145 aa)).

The protein belongs to the glycosyltransferase 2 family. OpgH subfamily.

It localises to the cell inner membrane. The protein operates within glycan metabolism; osmoregulated periplasmic glucan (OPG) biosynthesis. Functionally, involved in the biosynthesis of osmoregulated periplasmic glucans (OPGs). This is Glucans biosynthesis glucosyltransferase H from Salmonella typhimurium (strain LT2 / SGSC1412 / ATCC 700720).